The following is a 426-amino-acid chain: Protein trichome birefringence-like 19 (426 aa).

The helical; Signal-anchor for type II membrane protein transmembrane segment at 15–35 (LLIAVTIATSLLTIIPLLYPL) threads the bilayer. The short motif at 142–144 (GDS) is the GDS motif element. Positions 388–402 (DCVHWCLPGPIDNLN) match the DCXHWCLPGXXDXWN motif motif.

The protein belongs to the PC-esterase family. TBL subfamily.

The protein resides in the membrane. May act as a bridging protein that binds pectin and other cell wall polysaccharides. Probably involved in maintaining esterification of pectins. May be involved in the specific O-acetylation of cell wall polymers. This chain is Protein trichome birefringence-like 19 (TBL19), found in Arabidopsis thaliana (Mouse-ear cress).